A 514-amino-acid chain; its full sequence is Maturase K (514 aa).

This sequence belongs to the intron maturase 2 family. MatK subfamily.

Its subcellular location is the plastid. It localises to the chloroplast. Functionally, usually encoded in the trnK tRNA gene intron. Probably assists in splicing its own and other chloroplast group II introns. The protein is Maturase K of Tsuga canadensis (Eastern hemlock).